The chain runs to 73 residues: Large ribosomal subunit protein bL31 (73 aa).

Cysteine 16, cysteine 18, cysteine 37, and cysteine 40 together coordinate Zn(2+).

Belongs to the bacterial ribosomal protein bL31 family. Type A subfamily. As to quaternary structure, part of the 50S ribosomal subunit. Zn(2+) is required as a cofactor.

Functionally, binds the 23S rRNA. The protein is Large ribosomal subunit protein bL31 of Marinobacter nauticus (strain ATCC 700491 / DSM 11845 / VT8) (Marinobacter aquaeolei).